A 311-amino-acid chain; its full sequence is Putative F-box protein At1g31090 (311 aa).

One can recognise an F-box domain in the interval glycine 4–arginine 53. The interval arginine 287–alanine 311 is disordered.

This is Putative F-box protein At1g31090 from Arabidopsis thaliana (Mouse-ear cress).